A 294-amino-acid chain; its full sequence is NAD kinase (294 aa).

Catalysis depends on Asp72, which acts as the Proton acceptor. Residues 72–73, 146–147, Arg157, Arg174, Asp176, 187–192, and Gln247 each bind NAD(+); these read DG, ND, and TAYALS.

The protein belongs to the NAD kinase family. A divalent metal cation is required as a cofactor.

Its subcellular location is the cytoplasm. The catalysed reaction is NAD(+) + ATP = ADP + NADP(+) + H(+). Functionally, involved in the regulation of the intracellular balance of NAD and NADP, and is a key enzyme in the biosynthesis of NADP. Catalyzes specifically the phosphorylation on 2'-hydroxyl of the adenosine moiety of NAD to yield NADP. The protein is NAD kinase of Saccharophagus degradans (strain 2-40 / ATCC 43961 / DSM 17024).